The primary structure comprises 91 residues: Potassium channel toxin MeuTXK-beta-2 (91 aa).

Residues 1 to 19 (MQRNLVVLLFLGMVALSSC) form the signal peptide. The BetaSPN-type CS-alpha/beta domain maps to 54–91 (QFGCSAYQGYCDDHCQDIEKKEGFCHGFKCKCGIPMGF). Cystine bridges form between cysteine 57–cysteine 78, cysteine 64–cysteine 83, and cysteine 68–cysteine 85.

It belongs to the long chain scorpion toxin family. Class 1 subfamily. Expressed by the venom gland.

It is found in the secreted. Functionally, has a low affinity binding to potassium channels of rat brain synaptosomes. Displays weak antibacterial activity against Stenotrophomonas sp. Strongly inhibits the development of the Plasmodium berghei ookinetes. Displays slight hemolytic effect on mouse erythrocytes. Induces cytolysis on Xenopus oocytes at high concentrations. Is not toxic towards mice and towards the insect Tenebrio molitor. The protein is Potassium channel toxin MeuTXK-beta-2 of Mesobuthus eupeus (Lesser Asian scorpion).